We begin with the raw amino-acid sequence, 483 residues long: Nucleolar protein 4 (483 aa).

2 disordered regions span residues 210-418 and 435-483; these read QQDE…PIPS and SESR…DPQI. A compositionally biased stretch (acidic residues) spans 211–225; it reads QDEDESSIESDEFDM. Polar residues-rich tracts occupy residues 229-254, 262-271, and 302-317; these read TRMSAVNSDLSSNLEERMQSPQTVHG, AESSNGNETL, and QPLNLSDSPSSAQLTS. 2 stretches are compositionally biased toward basic and acidic residues: residues 319–330 and 340–350; these read FRIDDQGSDGKN and LKMEREARENG. Polar residues predominate over residues 351–363; sequence SKSPAHSYSSYDS. Composition is skewed to basic and acidic residues over residues 364 to 374, 391 to 409, and 435 to 451; these read GKNESVDRGAE, HEDSEKVNETDGVEAERLK, and SESRNAAKRMRLDKAQD. The span at 467 to 483 shows a compositional bias: polar residues; that stretch reads ATYSTATVPGSQEDPQI.

The protein localises to the nucleus. The protein resides in the nucleolus. This Mus musculus (Mouse) protein is Nucleolar protein 4 (Nol4).